A 485-amino-acid chain; its full sequence is Glutamate--tRNA ligase (485 aa).

Arg-6 contacts L-glutamate. Residues 9–19 (PSPTGNLHIGT) carry the 'HIGH' region motif. L-glutamate-binding positions include Tyr-192 and 210-214 (RGEDH). Residues 248-252 (KLSKR) carry the 'KMSKS' region motif. Residue Lys-251 participates in ATP binding.

This sequence belongs to the class-I aminoacyl-tRNA synthetase family. Glutamate--tRNA ligase type 1 subfamily. Monomer. Requires Does not require zinc. as cofactor.

The protein localises to the cytoplasm. The enzyme catalyses tRNA(Glu) + L-glutamate + ATP = L-glutamyl-tRNA(Glu) + AMP + diphosphate. In terms of biological role, non-discriminating glutamyl-tRNA synthetase. Catalyzes the attachment of glutamate to tRNA(Glu) in a two-step reaction: glutamate is first activated by ATP to form Glu-AMP and then transferred to the acceptor end of tRNA(Glu). Acylates both tRNA(Glu) and tRNA(Gln) with glutamate, but has 13-fold higher efficiency with tRNA(Glu). The sequence is that of Glutamate--tRNA ligase (gltX) from Thermosynechococcus vestitus (strain NIES-2133 / IAM M-273 / BP-1).